Here is a 410-residue protein sequence, read N- to C-terminus: Adenosylhomocysteinase (410 aa).

Asp-117 and Glu-142 together coordinate substrate. 143-145 (TTT) provides a ligand contact to NAD(+). Substrate-binding residues include Lys-172 and Asp-176. NAD(+) is bound by residues Asn-177, 206–211 (GYGYCG), Glu-229, 285–287 (AGH), and Asn-332.

It belongs to the adenosylhomocysteinase family. Requires NAD(+) as cofactor.

Its subcellular location is the cytoplasm. The enzyme catalyses S-adenosyl-L-homocysteine + H2O = L-homocysteine + adenosine. It participates in amino-acid biosynthesis; L-homocysteine biosynthesis; L-homocysteine from S-adenosyl-L-homocysteine: step 1/1. Functionally, may play a key role in the regulation of the intracellular concentration of adenosylhomocysteine. The sequence is that of Adenosylhomocysteinase from Thermoplasma volcanium (strain ATCC 51530 / DSM 4299 / JCM 9571 / NBRC 15438 / GSS1).